A 918-amino-acid polypeptide reads, in one-letter code: Leucine--tRNA ligase (918 aa).

The 'HIGH' region motif lies at 40-51 (PYPSGVGLHVGH). Positions 692–696 (KMSKS) match the 'KMSKS' region motif. Residue Lys-695 participates in ATP binding.

The protein belongs to the class-I aminoacyl-tRNA synthetase family.

The protein resides in the cytoplasm. It catalyses the reaction tRNA(Leu) + L-leucine + ATP = L-leucyl-tRNA(Leu) + AMP + diphosphate. The chain is Leucine--tRNA ligase from Azobacteroides pseudotrichonymphae genomovar. CFP2.